A 500-amino-acid polypeptide reads, in one-letter code: Glycerol-3-phosphate acyltransferase 7 (500 aa).

Transmembrane regions (helical) follow at residues 38–58 (GLIR…LDVL) and 235–255 (ALII…RIFV). Positions 298–303 (HRTLMD) match the HXXXXD motif motif.

This sequence belongs to the GPAT/DAPAT family. Weakly or not expressed in roots, leaves, seedlings, developing siliques and flower buds.

Its subcellular location is the membrane. The enzyme catalyses sn-glycerol 3-phosphate + an acyl-CoA = a 1-acyl-sn-glycero-3-phosphate + CoA. The protein operates within phospholipid metabolism; CDP-diacylglycerol biosynthesis; CDP-diacylglycerol from sn-glycerol 3-phosphate: step 1/3. Functionally, esterifies acyl-group from acyl-ACP to the sn-1 position of glycerol-3-phosphate, an essential step in glycerolipid biosynthesis. In Arabidopsis thaliana (Mouse-ear cress), this protein is Glycerol-3-phosphate acyltransferase 7 (GPAT7).